The chain runs to 169 residues: Lipoprotein signal peptidase (169 aa).

4 helical membrane-spanning segments follow: residues 10-30 (LPWL…KAFF), 41-61 (VVIP…AFSF), 68-88 (WQRW…VVWL), and 94-114 (GETW…GNLY). Residues aspartate 124 and aspartate 143 contribute to the active site. A helical membrane pass occupies residues 135 to 155 (YFPAFNLADSAITVGAVMLAL).

This sequence belongs to the peptidase A8 family.

The protein resides in the cell inner membrane. The enzyme catalyses Release of signal peptides from bacterial membrane prolipoproteins. Hydrolyzes -Xaa-Yaa-Zaa-|-(S,diacylglyceryl)Cys-, in which Xaa is hydrophobic (preferably Leu), and Yaa (Ala or Ser) and Zaa (Gly or Ala) have small, neutral side chains.. Its pathway is protein modification; lipoprotein biosynthesis (signal peptide cleavage). In terms of biological role, this protein specifically catalyzes the removal of signal peptides from prolipoproteins. This is Lipoprotein signal peptidase from Pseudomonas paraeruginosa (strain DSM 24068 / PA7) (Pseudomonas aeruginosa (strain PA7)).